A 290-amino-acid polypeptide reads, in one-letter code: 33 kDa chaperonin (290 aa).

2 cysteine pairs are disulfide-bonded: Cys235–Cys237 and Cys268–Cys271.

The protein belongs to the HSP33 family. Post-translationally, under oxidizing conditions two disulfide bonds are formed involving the reactive cysteines. Under reducing conditions zinc is bound to the reactive cysteines and the protein is inactive.

It localises to the cytoplasm. Functionally, redox regulated molecular chaperone. Protects both thermally unfolding and oxidatively damaged proteins from irreversible aggregation. Plays an important role in the bacterial defense system toward oxidative stress. The protein is 33 kDa chaperonin of Streptococcus pyogenes serotype M1.